The following is an 829-amino-acid chain: Isethionate sulfite-lyase (829 aa).

The PFL domain maps to 31–699 (ERVFNILDSF…VVSATPNGRL (669 aa)). 2-hydroxyethane-1-sulfonate contacts are provided by residues Arg-188, Gln-192, 467–469 (CTE), and Arg-677. Cys-467 (cysteine radical intermediate) is an active-site residue. The Proton acceptor role is filled by Glu-469. One can recognise a Glycine radical domain in the interval 706–829 (DGSSASHGAD…LIARTQHDAM (124 aa)). Gly-804 carries the glycine radical modification.

This sequence belongs to the glycyl radical enzyme (GRE) family. Homodimer. Post-translationally, requires the activating protein IslB to generate the key active site glycyl radical on Gly-804 that is involved in catalysis.

The enzyme catalyses 2-hydroxyethane-1-sulfonate = acetaldehyde + sulfite + H(+). The protein operates within organosulfur degradation; alkanesulfonate degradation. Its function is as follows. Involved in an anaerobic respiration pathway that converts the sulfonate isethionate (2-hydroxyethanesulfonate) to ammonia, acetate and sulfide. Catalyzes the radical-mediated C-S bond cleavage of isethionate (2-hydroxyethanesulfonate) to form sulfite and acetaldehyde. The sequence is that of Isethionate sulfite-lyase from Oleidesulfovibrio alaskensis (strain ATCC BAA-1058 / DSM 17464 / G20) (Desulfovibrio alaskensis).